Consider the following 98-residue polypeptide: NADH-ubiquinone oxidoreductase chain 4L (98 aa).

2 helical membrane passes run 26–46 (LVASLLCLEGMMMSLFIMATL) and 61–81 (IILLVFAACEAAVGLALLISI).

Belongs to the complex I subunit 4L family. In terms of assembly, core subunit of respiratory chain NADH dehydrogenase (Complex I) which is composed of 45 different subunits.

It is found in the mitochondrion inner membrane. It carries out the reaction a ubiquinone + NADH + 5 H(+)(in) = a ubiquinol + NAD(+) + 4 H(+)(out). Functionally, core subunit of the mitochondrial membrane respiratory chain NADH dehydrogenase (Complex I) which catalyzes electron transfer from NADH through the respiratory chain, using ubiquinone as an electron acceptor. Part of the enzyme membrane arm which is embedded in the lipid bilayer and involved in proton translocation. The sequence is that of NADH-ubiquinone oxidoreductase chain 4L (MT-ND4L) from Macaca nigrescens (Gorontalo macaque).